The sequence spans 341 residues: Glyceraldehyde-3-phosphate dehydrogenase 2 (341 aa).

NAD(+) is bound by residues 13–14 (RI), Asp35, and Arg85. D-glyceraldehyde 3-phosphate is bound by residues 157–159 (SCT), Thr188, 217–218 (TG), and Arg240. The active-site Nucleophile is the Cys158. Asn322 provides a ligand contact to NAD(+).

Belongs to the glyceraldehyde-3-phosphate dehydrogenase family. As to quaternary structure, homotetramer.

The protein resides in the cytoplasm. The enzyme catalyses D-glyceraldehyde 3-phosphate + phosphate + NAD(+) = (2R)-3-phospho-glyceroyl phosphate + NADH + H(+). Its pathway is carbohydrate degradation; glycolysis; pyruvate from D-glyceraldehyde 3-phosphate: step 1/5. In Caenorhabditis elegans, this protein is Glyceraldehyde-3-phosphate dehydrogenase 2 (gpd-2).